Reading from the N-terminus, the 351-residue chain is Phospho-N-acetylmuramoyl-pentapeptide-transferase (351 aa).

A run of 10 helical transmembrane segments spans residues 17–37 (MAYA…HIIL), 62–82 (GIPT…LVFW), 85–105 (ILNV…FLGF), 124–144 (FKIY…YYFG), 161–181 (IDLG…ASNS), 190–210 (GLAI…AYLT), 230–250 (LVIF…FNAY), 254–274 (IMMG…AALI), 279–299 (ILFS…IIQV), and 328–348 (QVVI…LSTI).

This sequence belongs to the glycosyltransferase 4 family. MraY subfamily. The cofactor is Mg(2+).

Its subcellular location is the cell inner membrane. It carries out the reaction UDP-N-acetyl-alpha-D-muramoyl-L-alanyl-gamma-D-glutamyl-meso-2,6-diaminopimeloyl-D-alanyl-D-alanine + di-trans,octa-cis-undecaprenyl phosphate = di-trans,octa-cis-undecaprenyl diphospho-N-acetyl-alpha-D-muramoyl-L-alanyl-D-glutamyl-meso-2,6-diaminopimeloyl-D-alanyl-D-alanine + UMP. It participates in cell wall biogenesis; peptidoglycan biosynthesis. Catalyzes the initial step of the lipid cycle reactions in the biosynthesis of the cell wall peptidoglycan: transfers peptidoglycan precursor phospho-MurNAc-pentapeptide from UDP-MurNAc-pentapeptide onto the lipid carrier undecaprenyl phosphate, yielding undecaprenyl-pyrophosphoryl-MurNAc-pentapeptide, known as lipid I. The polypeptide is Phospho-N-acetylmuramoyl-pentapeptide-transferase (Borrelia garinii subsp. bavariensis (strain ATCC BAA-2496 / DSM 23469 / PBi) (Borreliella bavariensis)).